We begin with the raw amino-acid sequence, 692 residues long: Elongation factor G (692 aa).

Positions D9–L283 constitute a tr-type G domain. Residues A18–T25, D82–H86, and N136–D139 each bind GTP.

Belongs to the TRAFAC class translation factor GTPase superfamily. Classic translation factor GTPase family. EF-G/EF-2 subfamily.

It is found in the cytoplasm. In terms of biological role, catalyzes the GTP-dependent ribosomal translocation step during translation elongation. During this step, the ribosome changes from the pre-translocational (PRE) to the post-translocational (POST) state as the newly formed A-site-bound peptidyl-tRNA and P-site-bound deacylated tRNA move to the P and E sites, respectively. Catalyzes the coordinated movement of the two tRNA molecules, the mRNA and conformational changes in the ribosome. This Thermotoga maritima (strain ATCC 43589 / DSM 3109 / JCM 10099 / NBRC 100826 / MSB8) protein is Elongation factor G (fusA).